The sequence spans 151 residues: Probable flavodoxin 2 (151 aa).

Positions 4 to 144 constitute a Flavodoxin-like domain; it reads ILLVYATMSG…ELINFGRQFA (141 aa). FMN-binding positions include 10-14 and 88-119; these read TMSGN and VFGS…DIVL.

This sequence belongs to the flavodoxin family. FMN serves as cofactor.

Low-potential electron donor to a number of redox enzymes. The chain is Probable flavodoxin 2 (ykuP) from Bacillus subtilis (strain 168).